The sequence spans 126 residues: Small ribosomal subunit protein uS13 (126 aa).

The disordered stretch occupies residues 99 to 126 (LRGQSTKNNARTRKGKRKTVANKKRVTK). Residues 108–126 (ARTRKGKRKTVANKKRVTK) show a composition bias toward basic residues.

The protein belongs to the universal ribosomal protein uS13 family. As to quaternary structure, part of the 30S ribosomal subunit. Forms a loose heterodimer with protein S19. Forms two bridges to the 50S subunit in the 70S ribosome.

Functionally, located at the top of the head of the 30S subunit, it contacts several helices of the 16S rRNA. In the 70S ribosome it contacts the 23S rRNA (bridge B1a) and protein L5 of the 50S subunit (bridge B1b), connecting the 2 subunits; these bridges are implicated in subunit movement. Contacts the tRNAs in the A and P-sites. The sequence is that of Small ribosomal subunit protein uS13 from Azobacteroides pseudotrichonymphae genomovar. CFP2.